We begin with the raw amino-acid sequence, 828 residues long: Periplasmic nitrate reductase (828 aa).

Positions 1 to 31 (MKLSRRSFMKANAVAAAAAAAGLSVPGVARA) form a signal peptide, tat-type signal. The 4Fe-4S Mo/W bis-MGD-type domain maps to 39-95 (IKWDKAPCRFCGTGCGVLVGTQQGRVVACQGDPDAPVNRGLNCIKGYFLPKIMYGKD). Residues Cys46, Cys49, Cys53, and Cys81 each coordinate [4Fe-4S] cluster. Mo-bis(molybdopterin guanine dinucleotide) contacts are provided by residues Lys83, Gln150, Asn175, Cys179, 212-219 (WGANMAEM), 243-247 (STYQH), 262-264 (QSD), Met372, Gln376, Asn482, 508-509 (SD), Lys531, Asp558, and 718-727 (TGRVLEHWHT). Residue Phe794 coordinates substrate. Mo-bis(molybdopterin guanine dinucleotide) contacts are provided by Asn802 and Lys819.

This sequence belongs to the prokaryotic molybdopterin-containing oxidoreductase family. NasA/NapA/NarB subfamily. In terms of assembly, component of the periplasmic nitrate reductase NapAB complex composed of NapA and NapB. [4Fe-4S] cluster serves as cofactor. Mo-bis(molybdopterin guanine dinucleotide) is required as a cofactor. Post-translationally, predicted to be exported by the Tat system. The position of the signal peptide cleavage has not been experimentally proven.

The protein localises to the periplasm. The catalysed reaction is 2 Fe(II)-[cytochrome] + nitrate + 2 H(+) = 2 Fe(III)-[cytochrome] + nitrite + H2O. Its function is as follows. Catalytic subunit of the periplasmic nitrate reductase complex NapAB. Receives electrons from NapB and catalyzes the reduction of nitrate to nitrite. This Shigella boydii serotype 18 (strain CDC 3083-94 / BS512) protein is Periplasmic nitrate reductase.